Here is a 309-residue protein sequence, read N- to C-terminus: Gamma-hemolysin component A (309 aa).

Residues Met1–Ala29 form the signal peptide.

The protein belongs to the aerolysin family. As to quaternary structure, toxicity requires sequential binding and synergistic association of a class S and a class F component which form heterooligomeric complexes. HlgA (class S) associates with HlgB (class F) thus forming an AB toxin in strains producing both gamma-hemolysins and leukocidins. HlgA and LukF-PV can also form a complex.

Its subcellular location is the secreted. In terms of biological role, toxin that seems to act by forming pores in the membrane of the cell. Has a hemolytic and a leucotoxic activity. In Staphylococcus aureus (strain COL), this protein is Gamma-hemolysin component A (hlgA).